The sequence spans 250 residues: Low affinity immunoglobulin gamma Fc region receptor III-A (250 aa).

The signal sequence occupies residues 1–20; sequence MWRLLSPTALLLLVSAGTRA. At 21 to 207 the chain is on the extracellular side; sequence ADLSKAMVVL…TSTFLPHWYQ (187 aa). Ig-like C2-type domains are found at residues 32-105 and 120-189; these read PEWN…LEVH and EGDT…VNIT. Disulfide bonds link cysteine 47–cysteine 89 and cysteine 128–cysteine 172. N-linked (GlcNAc...) asparagine glycans are attached at residues asparagine 63, asparagine 133, asparagine 180, and asparagine 187. Residues 208-228 form a helical membrane-spanning segment; that stretch reads IAFFLVTALLFVVDTGLHVAV. At 229–250 the chain is on the cytoplasmic side; that stretch reads QRDLQSSVKEWKDGKVTWSHGP.

Forms a heterooligomeric complex with ITAM-containing signaling subunits FCER1G. Interacts (via transmembrane domain) with signaling subunits; this interaction is a prerequisite for receptor complex expression on the cell surface and intracellular signal transduction. Binds the Fc region of antigen-complexed IgG.

The protein resides in the cell membrane. Its function is as follows. Receptor for the invariable Fc fragment of immunoglobulin gamma (IgG). Optimally activated upon binding of clustered antigen-IgG complexes displayed on cell surfaces, triggers lysis of antibody-coated cells, a process known as antibody-dependent cellular cytotoxicity (ADCC). Does not bind free monomeric IgG, thus avoiding inappropriate effector cell activation in the absence of antigenic trigger. Mediates IgG effector functions on natural killer (NK) cells. Binds antigen-IgG complexes generated upon infection and triggers NK cell-dependent cytokine production and degranulation to limit viral load and propagation. Fc-binding subunit that associates with FCER1G adapter to form functional signaling complexes. Following the engagement of antigen-IgG complexes, triggers phosphorylation of immunoreceptor tyrosine-based activation motif (ITAM)-containing adapter with subsequent activation of phosphatidylinositol 3-kinase signaling and sustained elevation of intracellular calcium that ultimately drive NK cell activation. Mediates enhanced ADCC in response to afucosylated IgGs. The sequence is that of Low affinity immunoglobulin gamma Fc region receptor III-A from Felis catus (Cat).